The chain runs to 285 residues: MPRLSEVITALDALWPAERAESWDAVGTVVGEPDQEVSRVLFAVDPVQETVDEAVGLGADLLVTHHPLYLRGTTTVAASTFKGRVVHTLIKNDIALHVAHTNADTADPGVSDALAGALDLNVVRPLVPDPSDPEGRRGLGRVCELTHPLTVRELAARAAERLPATAQGIRVAGDPEATVRTVAVSGGSGDSLFDHVRAAGVDAFLTADLRHHPVSEARAHNPLALLDAAHWATEWPWCELGAAQLDEISDRHGWDLRVHVSKTVTDPWTAHVASAPTSSAMGAPN.

A divalent metal cation is bound by residues His65, His66, Asp104, His230, and Glu234.

It belongs to the GTP cyclohydrolase I type 2/NIF3 family. As to quaternary structure, homohexamer.

The chain is GTP cyclohydrolase 1 type 2 homolog from Streptomyces coelicolor (strain ATCC BAA-471 / A3(2) / M145).